The primary structure comprises 90 residues: Large ribosomal subunit protein bL27 (90 aa).

Residues 1–22 form a disordered region; sequence MAHKKAGGSTRNGRDSNPKMLG.

It belongs to the bacterial ribosomal protein bL27 family.

The protein is Large ribosomal subunit protein bL27 of Coxiella burnetii (strain CbuK_Q154) (Coxiella burnetii (strain Q154)).